The sequence spans 67 residues: Large ribosomal subunit protein bL35 (67 aa).

This sequence belongs to the bacterial ribosomal protein bL35 family.

The protein is Large ribosomal subunit protein bL35 of Mesorhizobium japonicum (strain LMG 29417 / CECT 9101 / MAFF 303099) (Mesorhizobium loti (strain MAFF 303099)).